Here is a 465-residue protein sequence, read N- to C-terminus: Methionine aminopeptidase 2-2 (465 aa).

Over residues 1-13 the composition is skewed to basic and acidic residues; it reads MGSKTPNDHRRGP. The tract at residues 1–92 is disordered; the sequence is MGSKTPNDHR…KKKTLLGGLQ (92 aa). Positions 44 to 55 are enriched in acidic residues; sequence GETEDGEDEDDD. A compositionally biased stretch (basic residues) spans 71 to 86; the sequence is TKKKNKRKKNKKKKKT. H217 contacts substrate. D238, D249, and H318 together coordinate a divalent metal cation. H326 contacts substrate. E351 and E446 together coordinate a divalent metal cation.

It belongs to the peptidase M24A family. Methionine aminopeptidase eukaryotic type 2 subfamily. The cofactor is Co(2+). Zn(2+) is required as a cofactor. It depends on Mn(2+) as a cofactor. Fe(2+) serves as cofactor.

It localises to the cytoplasm. The catalysed reaction is Release of N-terminal amino acids, preferentially methionine, from peptides and arylamides.. Its function is as follows. Cotranslationally removes the N-terminal methionine from nascent proteins. The N-terminal methionine is often cleaved when the second residue in the primary sequence is small and uncharged (Met-Ala-, Cys, Gly, Pro, Ser, Thr, or Val). The polypeptide is Methionine aminopeptidase 2-2 (Ajellomyces dermatitidis (strain ER-3 / ATCC MYA-2586) (Blastomyces dermatitidis)).